The sequence spans 183 residues: MTKQPEDWLDDVPGDDIEDEDDEIIWVSKSEIKRDAEELKRLGAEIVDLGKNALYKIPLDADLRPAIELAQRIKMEGRRRQLQLIGKMLRQRDVEPIRQALDKLKNRHNQQVVLFHKLENLRDRLIDQGDDAIAEVLNLWPDADRQQLRTLIRNAKKEKEGNKPPKSARQIFQYLRELAENEG.

This sequence belongs to the DarP family.

It localises to the cytoplasm. Member of a network of 50S ribosomal subunit biogenesis factors which assembles along the 30S-50S interface, preventing incorrect 23S rRNA structures from forming. Promotes peptidyl transferase center (PTC) maturation. The sequence is that of Dual-action ribosomal maturation protein DarP from Shigella flexneri.